Here is a 400-residue protein sequence, read N- to C-terminus: MDSELSQSMVGSYLNPPERMHLPSFTQNEAFQNCHPGTPPKMFNSPNNQALVSALKTLQEKIRRLELERTQAEDNLNLLSREAAQYKKALEEETNERNLAHQELIKQKKDISIQLSSAQSRCILLEKQLEYTKRMVLNVEREKTMILEQQAQLQREKEQDQMKLHAKLEKLHVLEKECLRLTATRQTAEDKIKCLEEKLKEEEHQRRLFQDRACEKTNCLKREPPQQRDHKFRTPTFERKKPFRTTSQARANPQSSGEPVSICDSLSELLMTMEEELDQMNMEHRELLRQTMQPGNHSVSEDIEQELEQLAKKMESKGDQISKLKKHQDSVRKLQEKIENSRINESSGIHGNPKGSKNLKTSPRKCVSETSSFQRDRGFQPVQVHSLQSKLRRDDIKWEQ.

Ser45 is subject to Phosphoserine. 2 coiled-coil regions span residues Asn47 to Ile111 and Asn138 to Ala213. Disordered stretches follow at residues Arg222–Ser261 and Met314–Gln400. A compositionally biased stretch (polar residues) spans Arg244 to Glu258. Residues Ser261–Glu345 adopt a coiled-coil conformation. Composition is skewed to basic and acidic residues over residues Met314 to Arg342 and Leu391 to Gln400.

Belongs to the translokin family.

The protein resides in the cytoplasm. It localises to the cytoskeleton. It is found in the microtubule organizing center. The protein localises to the centrosome. Centrosomal protein which may be required for microtubule attachment to centrosomes. This chain is Centrosomal protein CEP57L1 (Cep57l1), found in Mus musculus (Mouse).